We begin with the raw amino-acid sequence, 243 residues long: Adenosylcobinamide-GDP ribazoletransferase (243 aa).

The next 7 helical transmembrane spans lie at Trp-8–Leu-28, Pro-36–Leu-56, Val-58–Leu-78, Ala-107–Ser-127, Lys-131–Ala-151, Phe-187–Pro-207, and Tyr-222–Ala-242.

It belongs to the CobS family. The cofactor is Mg(2+).

Its subcellular location is the cell inner membrane. It catalyses the reaction alpha-ribazole + adenosylcob(III)inamide-GDP = adenosylcob(III)alamin + GMP + H(+). The catalysed reaction is alpha-ribazole 5'-phosphate + adenosylcob(III)inamide-GDP = adenosylcob(III)alamin 5'-phosphate + GMP + H(+). Its pathway is cofactor biosynthesis; adenosylcobalamin biosynthesis; adenosylcobalamin from cob(II)yrinate a,c-diamide: step 7/7. Functionally, joins adenosylcobinamide-GDP and alpha-ribazole to generate adenosylcobalamin (Ado-cobalamin). Also synthesizes adenosylcobalamin 5'-phosphate from adenosylcobinamide-GDP and alpha-ribazole 5'-phosphate. This Thermosynechococcus vestitus (strain NIES-2133 / IAM M-273 / BP-1) protein is Adenosylcobinamide-GDP ribazoletransferase.